We begin with the raw amino-acid sequence, 219 residues long: Germin-like protein subfamily 2 member 2 (219 aa).

A signal peptide spans 1–22 (MMNSRISIIIALSCIMITSIRA). Cys32 and Cys47 form a disulfide bridge. N-linked (GlcNAc...) asparagine glycosylation is found at Asn52 and Asn70. Positions 59–209 (FFAGISKPAV…TFQVGSKMVD (151 aa)) constitute a Cupin type-1 domain. Mn(2+) contacts are provided by His109, His111, Glu116, and His155.

Belongs to the germin family. Oligomer (believed to be a pentamer but probably hexamer).

The protein localises to the secreted. The protein resides in the extracellular space. Its subcellular location is the apoplast. In terms of biological role, may play a role in plant defense. Probably has no oxalate oxidase activity even if the active site is conserved. In Arabidopsis thaliana (Mouse-ear cress), this protein is Germin-like protein subfamily 2 member 2.